The following is a 343-amino-acid chain: Transcription factor BPE (343 aa).

The bHLH domain maps to 142–192 (QATDSHSLAERARREKISERMKILQDLVPGCNKVIGKALVLDEIINYIQSL).

In terms of assembly, homodimer. In terms of tissue distribution, specifically expressed in flowers, mostly in petals, inflorescence and flower buds. Expressed ubiquitously (leaves, flowers and stems).

The protein resides in the nucleus. Its function is as follows. Involved in the control of petal size, by interfering with postmitotic cell expansion to limit final petal cell size. The protein is Transcription factor BPE (BPE) of Arabidopsis thaliana (Mouse-ear cress).